A 562-amino-acid polypeptide reads, in one-letter code: NAD-dependent malic enzyme (562 aa).

Y101 serves as the catalytic Proton donor. An NAD(+)-binding site is contributed by R154. The Proton acceptor role is filled by K172. A divalent metal cation is bound by residues E243, D244, and D267. Positions 267 and 415 each coordinate NAD(+).

Belongs to the malic enzymes family. As to quaternary structure, homotetramer. Requires Mg(2+) as cofactor. Mn(2+) serves as cofactor.

The enzyme catalyses (S)-malate + NAD(+) = pyruvate + CO2 + NADH. The catalysed reaction is oxaloacetate + H(+) = pyruvate + CO2. In Aliivibrio fischeri (strain ATCC 700601 / ES114) (Vibrio fischeri), this protein is NAD-dependent malic enzyme.